The primary structure comprises 103 residues: Small ribosomal subunit protein uS10 (103 aa).

The protein belongs to the universal ribosomal protein uS10 family. Part of the 30S ribosomal subunit.

In terms of biological role, involved in the binding of tRNA to the ribosomes. The sequence is that of Small ribosomal subunit protein uS10 from Shewanella denitrificans (strain OS217 / ATCC BAA-1090 / DSM 15013).